The primary structure comprises 179 residues: Protein GrpE (179 aa).

Belongs to the GrpE family. Homodimer.

It localises to the cytoplasm. Functionally, participates actively in the response to hyperosmotic and heat shock by preventing the aggregation of stress-denatured proteins, in association with DnaK and GrpE. It is the nucleotide exchange factor for DnaK and may function as a thermosensor. Unfolded proteins bind initially to DnaJ; upon interaction with the DnaJ-bound protein, DnaK hydrolyzes its bound ATP, resulting in the formation of a stable complex. GrpE releases ADP from DnaK; ATP binding to DnaK triggers the release of the substrate protein, thus completing the reaction cycle. Several rounds of ATP-dependent interactions between DnaJ, DnaK and GrpE are required for fully efficient folding. This chain is Protein GrpE, found in Rickettsia felis (strain ATCC VR-1525 / URRWXCal2) (Rickettsia azadi).